A 74-amino-acid polypeptide reads, in one-letter code: Exodeoxyribonuclease 7 small subunit (74 aa).

The protein belongs to the XseB family. In terms of assembly, heterooligomer composed of large and small subunits.

The protein resides in the cytoplasm. It carries out the reaction Exonucleolytic cleavage in either 5'- to 3'- or 3'- to 5'-direction to yield nucleoside 5'-phosphates.. Its function is as follows. Bidirectionally degrades single-stranded DNA into large acid-insoluble oligonucleotides, which are then degraded further into small acid-soluble oligonucleotides. In Clostridium beijerinckii (strain ATCC 51743 / NCIMB 8052) (Clostridium acetobutylicum), this protein is Exodeoxyribonuclease 7 small subunit.